Here is a 277-residue protein sequence, read N- to C-terminus: uncharacterized protein (277 aa).

ATP is bound at residue 32-39; that stretch reads GPQGSGKS.

The protein belongs to the GLYK kinase family.

It is found in the cytoplasm. The protein localises to the nucleus. Has a role in meiosis. This is an uncharacterized protein from Schizosaccharomyces pombe (strain 972 / ATCC 24843) (Fission yeast).